The sequence spans 338 residues: Solute carrier family 35 member G6 (338 aa).

Residues 1–25 (MAGSHPYLNPPDSTHPSPPSAPPSL) are disordered. 9 helical membrane-spanning segments follow: residues 40 to 60 (LLVA…LSHM), 67 to 87 (LPSL…ALLL), 105 to 125 (YFYA…VQVV), 160 to 180 (CGLL…LWTL), 190 to 210 (ALGY…LLVY), 221 to 241 (TVAF…LFVL), 255 to 275 (CVGA…YAVT), 281 to 301 (LVCA…YYML), and 310 to 330 (IVGA…NLSC). Residues 49–174 (LPAGFVGPLS…SILGLIIIVG (126 aa)) enclose the EamA 1 domain. An EamA 2 domain is found at 272–325 (YAVTKAHPALVCAVLHSEVVVALILQYYMLHETVAPSDIVGAGVVLGSIAIITA).

It belongs to the SLC35G solute transporter family. As to expression, expressed in placenta and testis.

The protein localises to the membrane. This chain is Solute carrier family 35 member G6 (SLC35G6), found in Homo sapiens (Human).